Reading from the N-terminus, the 486-residue chain is Protein pleiotropic regulatory locus 1 (486 aa).

The disordered stretch occupies residues glutamate 62 to threonine 101. WD repeat units follow at residues glycine 174–aspartate 204, glycine 216–aspartate 246, glycine 258–aspartate 288, glycine 300–aspartate 330, histidine 342–serine 371, glutamine 384–aspartate 413, and glutamate 433–lysine 463. 2 consecutive short sequence motifs (DWD box) follow at residues leucine 275–arginine 290 and valine 317–arginine 332. The segment at aspartate 465–phenylalanine 486 is disordered.

The protein belongs to the WD repeat PRL1/PRL2 family. In terms of assembly, component of the multiprotein assembly MOS4-associated complex (MAC) at least composed of MOS4, CDC5, PRL1 and PRP19. Interacts with CDC5. Component of the CUL4-RBX1-DDB1-PRL1 E3 ubiquitin-protein ligase complex. Interacts with DDB1A through its DWD motif. Interacts with AKIN10, AKIN11 and PIPC. Interacts with KAP2.

The protein localises to the nucleus. Its pathway is protein modification; protein ubiquitination. Pleiotropic regulator of glucose, stress and hormone responses. Also regulates cytochrome P450 CYP90A1/CPD. Coordinates the expression of hormone- and stress-related genes and genes related to cell wall modification and growth, leading to altered sugar-dependent growth and developmental responses. Component of the MAC complex that probably regulates defense responses through transcriptional control and thereby is essential for plant innate immunity. By suppressing the expression of several (1)O(2)-responsive genes, PRL1 seems to play a major role in modulating responses of plants to environmental changes by interconnecting (1)O(2)-mediated retrograde signaling with other signaling pathways. Acts as a negative regulator of SNF1-related protein kinases AKIN10 and AKIN11 via the inhibition of their interaction with SKP1/ASK1. Component of the CUL4-RBX1-DDB1-PRL1 E3 ubiquitin-protein ligase complex, PRL1 may function as the substrate recognition module within this complex, leading to the AKIN10 degradation. The polypeptide is Protein pleiotropic regulatory locus 1 (PRL1) (Arabidopsis thaliana (Mouse-ear cress)).